Reading from the N-terminus, the 213-residue chain is Orotate phosphoribosyltransferase (213 aa).

Lys26 is a binding site for 5-phospho-alpha-D-ribose 1-diphosphate. 34 to 35 lines the orotate pocket; sequence FF. Residues 72 to 73, Arg99, Lys100, Lys103, His105, and 124 to 132 contribute to the 5-phospho-alpha-D-ribose 1-diphosphate site; these read YK and DDVITAGTA. Thr128 and Arg156 together coordinate orotate.

The protein belongs to the purine/pyrimidine phosphoribosyltransferase family. PyrE subfamily. In terms of assembly, homodimer. Mg(2+) is required as a cofactor.

The enzyme catalyses orotidine 5'-phosphate + diphosphate = orotate + 5-phospho-alpha-D-ribose 1-diphosphate. Its pathway is pyrimidine metabolism; UMP biosynthesis via de novo pathway; UMP from orotate: step 1/2. Catalyzes the transfer of a ribosyl phosphate group from 5-phosphoribose 1-diphosphate to orotate, leading to the formation of orotidine monophosphate (OMP). This Klebsiella pneumoniae subsp. pneumoniae (strain ATCC 700721 / MGH 78578) protein is Orotate phosphoribosyltransferase.